Reading from the N-terminus, the 231-residue chain is Ribose-5-phosphate isomerase A (231 aa).

Substrate contacts are provided by residues 40-43 (TGST), 93-96 (DGAD), and 106-109 (KGGG). The active-site Proton acceptor is the E115. Substrate is bound at residue K133.

The protein belongs to the ribose 5-phosphate isomerase family. Homodimer.

The enzyme catalyses aldehydo-D-ribose 5-phosphate = D-ribulose 5-phosphate. It participates in carbohydrate degradation; pentose phosphate pathway; D-ribose 5-phosphate from D-ribulose 5-phosphate (non-oxidative stage): step 1/1. In terms of biological role, catalyzes the reversible conversion of ribose-5-phosphate to ribulose 5-phosphate. This Escherichia coli O1:K1 / APEC protein is Ribose-5-phosphate isomerase A.